Reading from the N-terminus, the 203-residue chain is Secreted phosphoprotein 24 (203 aa).

Positions 1–23 are cleaved as a signal peptide; sequence MEKMAMKMLVIFVLGMNHWTCTG. 2 disulfide bridges follow: Cys-86–Cys-97 and Cys-110–Cys-128. Ser-90 is modified (phosphoserine). Phosphoserine occurs at positions 138, 139, 166, and 175.

The protein belongs to the SPP2 family. Post-translationally, multiply phosphorylated at serine residues in Ser-X-Glu/Ser(P) sequences, a recognition motif for phosphorylation by secretory pathway protein kinase. In terms of processing, phosphorylation sites are present in the extracellular medium. As to expression, in liver and bone but not in heart, lung, kidney, or spleen.

Its subcellular location is the secreted. In terms of biological role, could coordinate an aspect of bone turnover. The polypeptide is Secreted phosphoprotein 24 (SPP2) (Bos taurus (Bovine)).